We begin with the raw amino-acid sequence, 670 residues long: Solute carrier organic anion transporter family member 1A1 (670 aa).

Topologically, residues Met1–Lys20 are cytoplasmic. The chain crosses the membrane as a helical span at residues Val21–Met40. The Extracellular segment spans residues Asn41–Gly59. The chain crosses the membrane as a helical span at residues Leu60 to Gly80. Residues Thr81–Pro86 are Cytoplasmic-facing. The helical transmembrane segment at Val87–Gly111 threads the bilayer. Topologically, residues Arg112–Ser155 are extracellular. 2 N-linked (GlcNAc...) asparagine glycosylation sites follow: Asn124 and Asn135. A helical membrane pass occupies residues Leu156–Glu184. Topologically, residues Asp185–Lys203 are cytoplasmic. A helical transmembrane segment spans residues Val204 to Ile224. Topologically, residues Gly225 to Val242 are extracellular. A helical membrane pass occupies residues Gly243 to Pro267. The Cytoplasmic segment spans residues Lys268–Arg311. A helical transmembrane segment spans residues Leu312–Ile333. The Extracellular portion of the chain corresponds to Asn334–Glu353. Residues Ala354–Met377 traverse the membrane as a helical segment. Over Lys378–Lys381 the chain is Cytoplasmic. A helical transmembrane segment spans residues Ile382–His405. Topologically, residues Phe406 to Phe513 are extracellular. The Kazal-like domain occupies Ser433 to Gln488. Intrachain disulfides connect Cys439–Cys469, Cys445–Cys465, and Cys454–Cys486. Asn492 is a glycosylation site (N-linked (GlcNAc...) asparagine). Residues Leu514 to Leu536 traverse the membrane as a helical segment. The Cytoplasmic portion of the chain corresponds to Arg537–Ser545. A helical membrane pass occupies residues Leu546–Ile571. The Extracellular segment spans residues Asp572–Pro605. Residues Ile606 to Met623 form a helical membrane-spanning segment. Residues Arg624–Leu670 are Cytoplasmic-facing. 2 positions are modified to phosphoserine: Ser634 and Ser635. Residues Gly645–Val654 are compositionally biased toward basic and acidic residues. A disordered region spans residues Gly645 to Leu670.

The protein belongs to the organo anion transporter (TC 2.A.60) family. As to quaternary structure, binds to PDZK1. Interaction with PDZK1 is required for expression on hepatocyte surface. Post-translationally, glycosylated. In terms of tissue distribution, highly expressed in liver and kidney, and at lower levels in brain, lung, skeletal muscle and proximal colon.

Its subcellular location is the basolateral cell membrane. The catalysed reaction is estrone 3-sulfate(out) + hydrogencarbonate(in) = estrone 3-sulfate(in) + hydrogencarbonate(out). It carries out the reaction taurocholate(out) + hydrogencarbonate(in) = taurocholate(in) + hydrogencarbonate(out). The enzyme catalyses L-thyroxine(out) = L-thyroxine(in). It catalyses the reaction prostaglandin E2(out) = prostaglandin E2(in). The catalysed reaction is 17beta-estradiol 17-O-(beta-D-glucuronate)(out) = 17beta-estradiol 17-O-(beta-D-glucuronate)(in). It carries out the reaction dehydroepiandrosterone 3-sulfate(out) = dehydroepiandrosterone 3-sulfate(in). Functionally, mediates the Na(+)-independent transport of organic anions such as steroid sulfate conjugates (dehydroepiandrosterone sulfate (DHEAS), 17-beta-glucuronosyl estradiol, estrone-3-sulfate), conjugated (taurocholate) and unconjugated (cholate) bile acids, prostaglandin E2 (PGE2) and L-thyroxine T4. Also capable of transporting sulfobromophthalein (BSP), ouabain and gadoxetate. Hydrogencarbonate/HCO3(-) acts as the probable counteranion that exchanges for organic anions. Shows a pH-sensitive substrate specificity which may be ascribed to the protonation state of the binding site and leads to a stimulation of substrate transport in an acidic microenvironment. In Rattus norvegicus (Rat), this protein is Solute carrier organic anion transporter family member 1A1.